Consider the following 162-residue polypeptide: MQLKSDMKRVEIFTDGACKGNPGPGGWGVCLHFNGETREFFGGEPVTTNNRMELLAAIRALQELESLEDNGQQHLQVQLHTDSQYVQKGISEWIHGWKKRGWRTADKKPVKNEALWRELDDLSQRHQVEWFWVRGHNGHAGNERADRLANQGVESVLSKKAD.

Residues 6-154 (DMKRVEIFTD…ADRLANQGVE (149 aa)) enclose the RNase H type-1 domain. Residues D15, E53, D82, and D146 each coordinate Mg(2+).

It belongs to the RNase H family. In terms of assembly, monomer. Mg(2+) is required as a cofactor.

It localises to the cytoplasm. It carries out the reaction Endonucleolytic cleavage to 5'-phosphomonoester.. Endonuclease that specifically degrades the RNA of RNA-DNA hybrids. The protein is Ribonuclease H of Nitrosomonas eutropha (strain DSM 101675 / C91 / Nm57).